Reading from the N-terminus, the 307-residue chain is Mediator of RNA polymerase II transcription subunit 18 (307 aa).

A compositionally biased stretch (polar residues) spans 117–126 (TNFNSTNEDQ). The segment at 117–162 (TNFNSTNEDQNNSKHTEDTVNESRNSDDIIDVDMDASPAPSNESCS) is disordered.

Belongs to the Mediator complex subunit 18 family. As to quaternary structure, component of the Mediator complex, which is composed of at least 21 subunits that form three structurally distinct submodules. The Mediator head module contains MED6, MED8, MED11, SRB4/MED17, SRB5/MED18, ROX3/MED19, SRB2/MED20 and SRB6/MED22, the middle module contains MED1, MED4, NUT1/MED5, MED7, CSE2/MED9, NUT2/MED10, SRB7/MED21 and SOH1/MED31, and the tail module contains MED2, PGD1/MED3, RGR1/MED14, GAL11/MED15 and SIN4/MED16. The head and the middle modules interact directly with RNA polymerase II, whereas the elongated tail module interacts with gene-specific regulatory proteins. SRB5/MED18 interacts directly with MED8 and SRB2/MED20.

It is found in the nucleus. Component of the Mediator complex, a coactivator involved in the regulated transcription of nearly all RNA polymerase II-dependent genes. Mediator functions as a bridge to convey information from gene-specific regulatory proteins to the basal RNA polymerase II transcription machinery. The Mediator complex, having a compact conformation in its free form, is recruited to promoters by direct interactions with regulatory proteins and serves for the assembly of a functional preinitiation complex with RNA polymerase II and the general transcription factors. The Mediator complex unfolds to an extended conformation and partially surrounds RNA polymerase II, specifically interacting with the unphosphorylated form of the C-terminal domain (CTD) of RNA polymerase II. The Mediator complex dissociates from the RNA polymerase II holoenzyme and stays at the promoter when transcriptional elongation begins. The polypeptide is Mediator of RNA polymerase II transcription subunit 18 (SRB5) (Saccharomyces cerevisiae (strain ATCC 204508 / S288c) (Baker's yeast)).